We begin with the raw amino-acid sequence, 324 residues long: Glutathione synthetase (324 aa).

Residues 124–309 (KLAIAQFREF…VAGMFIDALE (186 aa)) enclose the ATP-grasp domain. 150-206 (HAEQGDVIFKPLDGMGGAGIFRVGADGMNLGSVIETLTHNGTRTVMAQQYIPAIRDG) provides a ligand contact to ATP. Positions 280 and 282 each coordinate Mg(2+).

This sequence belongs to the prokaryotic GSH synthase family. Mg(2+) serves as cofactor. The cofactor is Mn(2+).

The enzyme catalyses gamma-L-glutamyl-L-cysteine + glycine + ATP = glutathione + ADP + phosphate + H(+). It participates in sulfur metabolism; glutathione biosynthesis; glutathione from L-cysteine and L-glutamate: step 2/2. The polypeptide is Glutathione synthetase (Ralstonia nicotianae (strain ATCC BAA-1114 / GMI1000) (Ralstonia solanacearum)).